The sequence spans 440 residues: Integral membrane protein GPR180 (440 aa).

A signal peptide spans 1 to 22 (MGGLRLLAVALTCCWWPQGSQG). N-linked (GlcNAc...) asparagine glycosylation is found at Asn105 and Asn110. 7 consecutive transmembrane segments (helical) span residues 173–193 (FFFL…QSLW), 202–222 (MHMI…SALA), 249–269 (IASQ…WTIV), 284–304 (TPAS…LLLW), 321–341 (LAGI…GCGL), 360–380 (FAKG…ISVI), and 389–409 (VITI…YRLF).

It localises to the membrane. The sequence is that of Integral membrane protein GPR180 (GPR180) from Homo sapiens (Human).